A 366-amino-acid polypeptide reads, in one-letter code: Alanine racemase (366 aa).

Catalysis depends on Lys-33, which acts as the Proton acceptor; specific for D-alanine. Lys-33 carries the N6-(pyridoxal phosphate)lysine modification. Arg-129 is a substrate binding site. The Proton acceptor; specific for L-alanine role is filled by Tyr-253. Met-301 is a substrate binding site.

The protein belongs to the alanine racemase family. The cofactor is pyridoxal 5'-phosphate.

The catalysed reaction is L-alanine = D-alanine. It functions in the pathway amino-acid biosynthesis; D-alanine biosynthesis; D-alanine from L-alanine: step 1/1. Catalyzes the interconversion of L-alanine and D-alanine. May also act on other amino acids. In Xanthomonas oryzae pv. oryzae (strain MAFF 311018), this protein is Alanine racemase (alr).